A 398-amino-acid polypeptide reads, in one-letter code: Acetylornithine aminotransferase (398 aa).

Pyridoxal 5'-phosphate contacts are provided by residues 105-106 (GA) and Phe-138. Arg-141 contacts N(2)-acetyl-L-ornithine. 223-226 (DEVQ) serves as a coordination point for pyridoxal 5'-phosphate. Lys-252 is subject to N6-(pyridoxal phosphate)lysine. Thr-280 lines the N(2)-acetyl-L-ornithine pocket. Thr-281 contacts pyridoxal 5'-phosphate.

It belongs to the class-III pyridoxal-phosphate-dependent aminotransferase family. ArgD subfamily. In terms of assembly, homodimer. The cofactor is pyridoxal 5'-phosphate.

It localises to the cytoplasm. It catalyses the reaction N(2)-acetyl-L-ornithine + 2-oxoglutarate = N-acetyl-L-glutamate 5-semialdehyde + L-glutamate. The protein operates within amino-acid biosynthesis; L-arginine biosynthesis; N(2)-acetyl-L-ornithine from L-glutamate: step 4/4. The protein is Acetylornithine aminotransferase of Methanocaldococcus jannaschii (strain ATCC 43067 / DSM 2661 / JAL-1 / JCM 10045 / NBRC 100440) (Methanococcus jannaschii).